We begin with the raw amino-acid sequence, 380 residues long: Queuine tRNA-ribosyltransferase (380 aa).

Aspartate 96 functions as the Proton acceptor in the catalytic mechanism. Residues 96 to 100, aspartate 150, glutamine 193, and glycine 220 contribute to the substrate site; that span reads DSGGF. The interval 251–257 is RNA binding; that stretch reads GVGAPDS. Aspartate 270 acts as the Nucleophile in catalysis. The tract at residues 275–279 is RNA binding; important for wobble base 34 recognition; the sequence is TRIAR. 4 residues coordinate Zn(2+): cysteine 308, cysteine 310, cysteine 313, and histidine 339.

This sequence belongs to the queuine tRNA-ribosyltransferase family. Homodimer. Within each dimer, one monomer is responsible for RNA recognition and catalysis, while the other monomer binds to the replacement base PreQ1. The cofactor is Zn(2+).

The catalysed reaction is 7-aminomethyl-7-carbaguanine + guanosine(34) in tRNA = 7-aminomethyl-7-carbaguanosine(34) in tRNA + guanine. The protein operates within tRNA modification; tRNA-queuosine biosynthesis. In terms of biological role, catalyzes the base-exchange of a guanine (G) residue with the queuine precursor 7-aminomethyl-7-deazaguanine (PreQ1) at position 34 (anticodon wobble position) in tRNAs with GU(N) anticodons (tRNA-Asp, -Asn, -His and -Tyr). Catalysis occurs through a double-displacement mechanism. The nucleophile active site attacks the C1' of nucleotide 34 to detach the guanine base from the RNA, forming a covalent enzyme-RNA intermediate. The proton acceptor active site deprotonates the incoming PreQ1, allowing a nucleophilic attack on the C1' of the ribose to form the product. After dissociation, two additional enzymatic reactions on the tRNA convert PreQ1 to queuine (Q), resulting in the hypermodified nucleoside queuosine (7-(((4,5-cis-dihydroxy-2-cyclopenten-1-yl)amino)methyl)-7-deazaguanosine). This chain is Queuine tRNA-ribosyltransferase, found in Streptococcus equi subsp. equi (strain 4047).